The primary structure comprises 444 residues: Gentisate transporter (444 aa).

A run of 12 helical transmembrane segments spans residues 42 to 64 (AAVL…YGTV), 79 to 101 (LGTI…GRLS), 108 to 127 (AAVI…CAFA), 131 to 153 (WVFG…SVNA), 166 to 188 (AWAT…LALV), 198 to 220 (WRFM…MKVI), 252 to 274 (WISI…LGTW), 289 to 311 (ALMF…AWAG), 318 to 340 (RSGV…YPPV), 344 to 366 (YVIL…AAVA), 378 to 400 (LGWA…GLLL), and 410 to 428 (FIMF…SVLL).

Belongs to the major facilitator superfamily. Aromatic acid:H(+) symporter (AAHS) (TC 2.A.1.15) family.

Its subcellular location is the cell membrane. In terms of biological role, transport of gentisate (2,5-dihydroxybenzoate) into the cell. Does not transport 3-hydroxybenzoate or benzoate. This chain is Gentisate transporter (genK), found in Corynebacterium glutamicum (strain ATCC 13032 / DSM 20300 / JCM 1318 / BCRC 11384 / CCUG 27702 / LMG 3730 / NBRC 12168 / NCIMB 10025 / NRRL B-2784 / 534).